The chain runs to 80 residues: MKDNVHPNYKDVVFHDVTSDFKILTRSTMTSKETVKWEDGQEYPLIKVEISSSSHPFYTGKHKVIDTGGRIDKFQKRYAR.

This sequence belongs to the bacterial ribosomal protein bL31 family. Type B subfamily. In terms of assembly, part of the 50S ribosomal subunit.

In Xanthomonas axonopodis pv. citri (strain 306), this protein is Large ribosomal subunit protein bL31B.